The sequence spans 335 residues: MSHPAIIALTPGEPAGIGPDLTVMAAQQARDYPLVALCDPQLLKDRAKLLGLPLTVSTYIQGSAVTTSAQHISVMPIPLGAPCEAGTLDSTNAAYVIETLKQATEGCLSGEFAAVVTGPVQKSVINEAGINFSGHTEYFADNSNTPRVVMMLATEGLRVALATTHLPLKDVSAAITTASLTETLNILLADLQLKFGLSQPRVLVCGLNPHAGEGGHLGMEEIDTIIPVLEQFRARGHNLVGPLPADTLFNPKYLSDADAVLAMYHDQGLPVLKYKGFGNAVNITLGLPFIRTSVDHGTALDLAGTGKANIGSLQVALGYAQNLAMQQASINEIAG.

The substrate site is built by histidine 135 and threonine 136. A divalent metal cation-binding residues include histidine 165, histidine 210, and histidine 265. 3 residues coordinate substrate: lysine 273, asparagine 282, and arginine 291.

The protein belongs to the PdxA family. As to quaternary structure, homodimer. It depends on Zn(2+) as a cofactor. Mg(2+) serves as cofactor. The cofactor is Co(2+).

The protein resides in the cytoplasm. It catalyses the reaction 4-(phosphooxy)-L-threonine + NAD(+) = 3-amino-2-oxopropyl phosphate + CO2 + NADH. It functions in the pathway cofactor biosynthesis; pyridoxine 5'-phosphate biosynthesis; pyridoxine 5'-phosphate from D-erythrose 4-phosphate: step 4/5. Its function is as follows. Catalyzes the NAD(P)-dependent oxidation of 4-(phosphooxy)-L-threonine (HTP) into 2-amino-3-oxo-4-(phosphooxy)butyric acid which spontaneously decarboxylates to form 3-amino-2-oxopropyl phosphate (AHAP). The protein is 4-hydroxythreonine-4-phosphate dehydrogenase of Saccharophagus degradans (strain 2-40 / ATCC 43961 / DSM 17024).